A 479-amino-acid chain; its full sequence is Long-chain acyl-protein thioester reductase (479 aa).

The protein belongs to the LuxC family.

It carries out the reaction a long-chain fatty aldehyde + NADP(+) + CoA = a long-chain fatty acyl-CoA + NADPH + H(+). It participates in lipid metabolism; fatty acid reduction for biolumincescence. In terms of biological role, luxC is the fatty acid reductase enzyme responsible for synthesis of the aldehyde substrate for the luminescent reaction catalyzed by luciferase. The chain is Long-chain acyl-protein thioester reductase (luxC) from Aliivibrio fischeri (Vibrio fischeri).